A 63-amino-acid polypeptide reads, in one-letter code: Large ribosomal subunit protein bL28 (63 aa).

Belongs to the bacterial ribosomal protein bL28 family.

The sequence is that of Large ribosomal subunit protein bL28 (rpmB) from Selenomonas ruminantium.